The sequence spans 582 residues: MALFTVSRIQTTPFDGQKPGTSGLRKKVKVFVQPHYLENFVQASFNALTEGKVRGATLVVSGDGRYYSEQAIQIITKMAAANGVRRIWIGQNGLLSTPAVSAVIRERVGVDGSKATGSFILTASHNPGGPNEDFGIKYNMENGGPAPEGITNKIYENTTTIKEYLIAPDLPNVDITTVGVTNFTGPEGPFDIEVFDSASDYIKLMKSIFDFESIRKLLTSPKFSFCYDALHGVAGAYAKRIFVDELGAQENSLINCVPKEDFGGGHPDPNLTYAKELVARMGLGKSEPEGEVPEFGAAADGDADRNMVLGKRFFVTPSDSVAIIAANAVEAIPYFSAGLKGVARSMPTSAALDVVAKHLNLKFFEVPTGWKFFGNLMDAGLCSVCGEESFGTGSDHIREKDGIWAVLAWLSILAYKTKDNLESKLVSVEDIVRQHWATYGRHYYTRYDYENVDAGAAKELMAHLVKLQSSLPEVNEIIKGASSDVSKVVHGDEFEYNDPVDGSISSHQGIRYLFEDGSRLIFRLSGTGSEGATIRLYIEQYEKDPSKIGRLSHEALAPLVEAALKLSKMEEFTGRSAPTVIT.

Alpha-D-glucose 1,6-bisphosphate-binding residues include arginine 25 and serine 124. Serine 124 serves as the catalytic Phosphoserine intermediate. The Mg(2+) site is built by serine 124, aspartate 300, aspartate 302, and aspartate 304. Phosphoserine is present on serine 124. Residues aspartate 304, arginine 305, threonine 368, glutamate 387, serine 389, and lysine 400 each coordinate alpha-D-glucose 1,6-bisphosphate.

This sequence belongs to the phosphohexose mutase family. In terms of assembly, monomer. Mg(2+) is required as a cofactor.

It localises to the cytoplasm. It carries out the reaction alpha-D-glucose 1-phosphate = alpha-D-glucose 6-phosphate. The catalysed reaction is O-phospho-L-seryl-[protein] + alpha-D-glucose 1-phosphate = alpha-D-glucose 1,6-bisphosphate + L-seryl-[protein]. The enzyme catalyses alpha-D-glucose 1,6-bisphosphate + L-seryl-[protein] = O-phospho-L-seryl-[protein] + alpha-D-glucose 6-phosphate. Functionally, catalyzes the reversible isomerization of alpha-D-glucose 1-phosphate to alpha-D-glucose 6-phosphate. The mechanism proceeds via the intermediate compound alpha-D-glucose 1,6-bisphosphate. This enzyme participates in both the breakdown and synthesis of glucose. This chain is Phosphoglucomutase, cytoplasmic (PGM1), found in Pisum sativum (Garden pea).